The primary structure comprises 396 residues: Phosphoglycerate kinase (396 aa).

Substrate contacts are provided by residues 21–23, Arg36, 59–62, Arg118, and Arg151; these read DFN and HLGR. ATP-binding positions include Lys201, Gly292, Glu323, and 349–352; that span reads GGDS.

Belongs to the phosphoglycerate kinase family. In terms of assembly, monomer.

The protein resides in the cytoplasm. The catalysed reaction is (2R)-3-phosphoglycerate + ATP = (2R)-3-phospho-glyceroyl phosphate + ADP. It functions in the pathway carbohydrate degradation; glycolysis; pyruvate from D-glyceraldehyde 3-phosphate: step 2/5. This chain is Phosphoglycerate kinase, found in Leptospira borgpetersenii serovar Hardjo-bovis (strain L550).